A 243-amino-acid chain; its full sequence is CTD nuclear envelope phosphatase 1 homolog (243 aa).

Residues Ala-11 to Phe-27 form a helical membrane-spanning segment. The FCP1 homology domain occupies Ser-56–Leu-223.

Belongs to the dullard family.

The protein resides in the membrane. The enzyme catalyses O-phospho-L-seryl-[protein] + H2O = L-seryl-[protein] + phosphate. It catalyses the reaction O-phospho-L-threonyl-[protein] + H2O = L-threonyl-[protein] + phosphate. In terms of biological role, serine/threonine protein phosphatase that may dephosphorylate and activate lipin-like phosphatases. Lipins are phosphatidate phosphatases that catalyze the conversion of phosphatidic acid to diacylglycerol and control the metabolism of fatty acids at different levels. May indirectly modulate the lipid composition of nuclear and/or endoplasmic reticulum membranes and be required for proper nuclear membrane morphology and/or dynamics. May also indirectly regulate the production of lipid droplets and triacylglycerol. This chain is CTD nuclear envelope phosphatase 1 homolog (l(1)G0269), found in Drosophila pseudoobscura pseudoobscura (Fruit fly).